The following is a 149-amino-acid chain: Nucleoside diphosphate kinase (149 aa).

Residues K9, F57, R85, T91, R102, and N112 each coordinate ATP. H115 serves as the catalytic Pros-phosphohistidine intermediate.

The protein belongs to the NDK family. It depends on Mg(2+) as a cofactor.

It localises to the cytoplasm. The enzyme catalyses a 2'-deoxyribonucleoside 5'-diphosphate + ATP = a 2'-deoxyribonucleoside 5'-triphosphate + ADP. The catalysed reaction is a ribonucleoside 5'-diphosphate + ATP = a ribonucleoside 5'-triphosphate + ADP. Its function is as follows. Major role in the synthesis of nucleoside triphosphates other than ATP. The ATP gamma phosphate is transferred to the NDP beta phosphate via a ping-pong mechanism, using a phosphorylated active-site intermediate. This Methanosarcina mazei (strain ATCC BAA-159 / DSM 3647 / Goe1 / Go1 / JCM 11833 / OCM 88) (Methanosarcina frisia) protein is Nucleoside diphosphate kinase.